A 309-amino-acid polypeptide reads, in one-letter code: NADH-cytochrome b5 reductase 2 (309 aa).

A helical transmembrane segment spans residues 3 to 23 (ILTAPVLIGVSIVVITVLYLF). Residues 48–160 (SVKYPLPLIE…RGPNGLLVYN (113 aa)) enclose the FAD-binding FR-type domain. FAD is bound by residues 140-170 (DNMKIGDTIDFRGPNGLLVYNGKGKFAIRPD) and 179-214 (KFKHVAMIAGGTGITPMLQLIRSITADSFDETVCSL).

Belongs to the flavoprotein pyridine nucleotide cytochrome reductase family. It depends on FAD as a cofactor.

The protein resides in the membrane. It carries out the reaction 2 Fe(III)-[cytochrome b5] + NADH = 2 Fe(II)-[cytochrome b5] + NAD(+) + H(+). Functionally, NADH-cytochrome b5 reductases are involved in desaturation and elongation of fatty acids, cholesterol biosynthesis and drug metabolism. The polypeptide is NADH-cytochrome b5 reductase 2 (cyb5r2) (Danio rerio (Zebrafish)).